A 163-amino-acid polypeptide reads, in one-letter code: Lipoprotein signal peptidase (163 aa).

Transmembrane regions (helical) follow at residues 9–29 (YLAI…SALS), 39–59 (VLPF…SFLA), 67–87 (WFFT…LYKS), and 92–112 (LLCI…LDRV). Catalysis depends on residues aspartate 119 and aspartate 137. A helical transmembrane segment spans residues 130–150 (WPAFNIADSAICVGAALIIWG).

Belongs to the peptidase A8 family.

The protein localises to the cell inner membrane. The enzyme catalyses Release of signal peptides from bacterial membrane prolipoproteins. Hydrolyzes -Xaa-Yaa-Zaa-|-(S,diacylglyceryl)Cys-, in which Xaa is hydrophobic (preferably Leu), and Yaa (Ala or Ser) and Zaa (Gly or Ala) have small, neutral side chains.. The protein operates within protein modification; lipoprotein biosynthesis (signal peptide cleavage). This protein specifically catalyzes the removal of signal peptides from prolipoproteins. In Polynucleobacter necessarius subsp. necessarius (strain STIR1), this protein is Lipoprotein signal peptidase.